Reading from the N-terminus, the 184-residue chain is Photosystem I assembly protein Ycf4 (184 aa).

Transmembrane regions (helical) follow at residues 22–42 (FCWACILFLGSIGFLLVGISS) and 57–77 (ILFFPQGIVMCFYGIAGLFIS).

It belongs to the Ycf4 family.

Its subcellular location is the plastid. It is found in the chloroplast thylakoid membrane. Its function is as follows. Seems to be required for the assembly of the photosystem I complex. This Illicium oligandrum (Star anise) protein is Photosystem I assembly protein Ycf4.